The chain runs to 120 residues: NAD(P)H-quinone oxidoreductase subunit 3 (120 aa).

The next 3 membrane-spanning stretches (helical) occupy residues 10-30 (LLVF…ASAL), 64-84 (MFAL…PWAV), and 89-109 (LGLL…VGLV).

Belongs to the complex I subunit 3 family. In terms of assembly, NDH-1 can be composed of about 15 different subunits; different subcomplexes with different compositions have been identified which probably have different functions.

It localises to the cellular thylakoid membrane. It carries out the reaction a plastoquinone + NADH + (n+1) H(+)(in) = a plastoquinol + NAD(+) + n H(+)(out). The catalysed reaction is a plastoquinone + NADPH + (n+1) H(+)(in) = a plastoquinol + NADP(+) + n H(+)(out). In terms of biological role, NDH-1 shuttles electrons from an unknown electron donor, via FMN and iron-sulfur (Fe-S) centers, to quinones in the respiratory and/or the photosynthetic chain. The immediate electron acceptor for the enzyme in this species is believed to be plastoquinone. Couples the redox reaction to proton translocation, and thus conserves the redox energy in a proton gradient. Cyanobacterial NDH-1 also plays a role in inorganic carbon-concentration. The chain is NAD(P)H-quinone oxidoreductase subunit 3 from Synechococcus sp. (strain JA-2-3B'a(2-13)) (Cyanobacteria bacterium Yellowstone B-Prime).